Reading from the N-terminus, the 192-residue chain is ADP-ribose glycohydrolase AF_1521 (192 aa).

One can recognise a Macro domain in the interval 1-192 (MEVLFEAKVG…VALKVFERSL (192 aa)). Substrate is bound by residues 19-21 (GDI), 32-34 (AAN), 39-44 (HGGGVA), and 140-146 (VSAGIYG).

The enzyme catalyses 5-O-(ADP-D-ribosyl)-L-glutamyl-[protein] + H2O = L-glutamyl-[protein] + ADP-D-ribose + H(+). It carries out the reaction 4-O-(ADP-D-ribosyl)-L-aspartyl-[protein] + H2O = L-aspartyl-[protein] + ADP-D-ribose + H(+). It catalyses the reaction alpha-NAD(+) + H2O = ADP-D-ribose + nicotinamide + H(+). In terms of biological role, removes ADP-ribose from aspartate and glutamate residues in proteins bearing a single ADP-ribose moiety. Inactive towards proteins bearing poly-ADP-ribose. Catalyzes removal of a phosphate group from ADP-ribose 1''-phosphate (Appr1p), but with low efficiency. This chain is ADP-ribose glycohydrolase AF_1521, found in Archaeoglobus fulgidus (strain ATCC 49558 / DSM 4304 / JCM 9628 / NBRC 100126 / VC-16).